A 1069-amino-acid chain; its full sequence is Protocadherin-8 (1069 aa).

The signal sequence occupies residues 1 to 29; sequence MSPVKRWGSPCLFPLQLFSLCWVLSVAQS. Cadherin domains are found at residues 30–135, 136–245, 247–354, 393–497, 498–609, and 615–721; these read KTVR…APRF, PRAQ…SPAF, QGAV…APDI, QETG…APLF, TKPV…SPVL, and ANGS…VPAS. Residues 30 to 747 lie on the Extracellular side of the membrane; sequence KTVRYSTFEE…SGPSLQWDTP (718 aa). A glycan (N-linked (GlcNAc...) asparagine) is linked at Asn616. Residues 719 to 738 are disordered; it reads PASAGSPEHFRPPGSRLAPS. Residues 748–768 form a helical membrane-spanning segment; that stretch reads LIVIIVLAGSCTLLLAAIIAI. The Cytoplasmic portion of the chain corresponds to 769 to 1069; it reads ATTCNRRKKE…SPKKGTNENV (301 aa). Disordered regions lie at residues 777–859, 905–927, and 1031–1069; these read KEVR…TGES, REAEKFSGKDSGKGDSDFNDSDS, and LSPPRPGRLPDLQEIGVPLYESPPGGRYVSPKKGTNENV. Composition is skewed to basic and acidic residues over residues 780–790 and 905–920; these read RKGGALREERP and REAEKFSGKDSGKGDS. Ser1052 carries the post-translational modification Phosphoserine.

The N-terminal extracellular domain forms homophilic interactions; these interactions activate p38 MAPK via TAOK2 and trigger endocytosis. Interacts with CDH2; this interaction may lead to CDH2 cointernalization. Interacts with CDH11. Interacts with TAOK2. In terms of tissue distribution, enriched in brain relative to peripheral tissues, with low expression in the testis. Expressed in hippocampal neurons (at protein level).

Its subcellular location is the cell membrane. The protein resides in the cell projection. The protein localises to the dendrite. It is found in the presynaptic cell membrane. It localises to the postsynaptic cell membrane. Functionally, calcium-dependent cell-adhesion protein. May play a role in activity-induced synaptic reorganization underlying long term memory. Could be involved in CDH2 internalization through TAOK2/p38 MAPK pathway. In hippocampal neurons, may play a role in the down-regulation of dendritic spines, maybe through its action on CDH2 endocytosis. This Rattus norvegicus (Rat) protein is Protocadherin-8 (Pcdh8).